The primary structure comprises 141 residues: Cystatin-S (141 aa).

Residues 1 to 27 form the signal peptide; it reads MAYLLHAQLFLLTTFILVLNMRLCPVL. Positions 76–80 match the Secondary area of contact motif; it reads QVVAG. Intrachain disulfides connect C94/C104 and C118/C138.

This sequence belongs to the cystatin family. As to expression, found in saliva, tears, urine and seminal fluid.

The protein localises to the secreted. In terms of biological role, this protein strongly inhibits papain and ficin, partially inhibits stem bromelain and bovine cathepsin C, but does not inhibit porcine cathepsin B or clostripain. Papain is inhibited non-competitively. The chain is Cystatin-S (Cst4) from Rattus norvegicus (Rat).